The sequence spans 704 residues: Chloride intracellular channel protein 6 (704 aa).

The segment covering 1-13 (MAEAAEPEGVAPG) has biased composition (low complexity). The segment at 1-446 (MAEAAEPEGV…EDGEASEPRA (446 aa)) is disordered. The segment covering 39 to 48 (EGPEGSEGAE) has biased composition (acidic residues). Position 44 is a phosphoserine (serine 44). The span at 67–83 (RGPEAEARGTRGAHGET) shows a compositional bias: basic and acidic residues. Positions 90-100 (PEGAEVPQGGE) are enriched in low complexity. Residues 121 to 147 (PRGEAQREPEDSAAPERQEEAEQRPEV) are compositionally biased toward basic and acidic residues. A run of 13 repeats spans residues 157 to 166 (GDSVDAEGPL), 167 to 176 (GDNIEAEGPA), 177 to 186 (GDSVEAEGRV), 187 to 196 (GDSVDAEGPA), 197 to 206 (GDSVDAEGPL), 207 to 216 (GDNIQAEGPA), 217 to 226 (GDSVDAEGRV), 227 to 236 (GDSVDAEGPA), 237 to 246 (GDSVDAEGRV), 247 to 256 (GDSVEAGDPA), 257 to 266 (GDGVEAGVPA), 267 to 276 (GDSVEAEGPA), and 277 to 286 (GDSMDAEGPA). Residues 157 to 282 (GDSVDAEGPL…EGPAGDSMDA (126 aa)) are 13 X 10 AA tandem repeat of G-D-[SNG]-[VIM]-[DEQ]-A-[EAG]-[GDVE]-[PRG]-[LAVP]. Positions 295-306 (EPQQSGDGSLSP) are enriched in polar residues. 2 stretches are compositionally biased toward basic and acidic residues: residues 350-360 (ARADAGEDRVG) and 371-385 (EERR…REEE). 2 positions are modified to phosphoserine: serine 397 and serine 442. The segment covering 434-446 (GRREDGEASEPRA) has biased composition (basic and acidic residues). Positions 487 to 490 (CPFS) match the G-site motif. A helical membrane pass occupies residues 489 to 509 (FSQRLFMILWLKGVIFNVTTV). Residues 556–704 (YPKLGTQHPE…AYSDVAKRMK (149 aa)) enclose the GST C-terminal domain.

It belongs to the chloride channel CLIC family. In terms of assembly, monomer (soluble state). Interacts with dopamine receptors DRD2, DRD3 and DRD4. Phosphorylated. Expressed in brain, placenta, pancreas, liver, lung, heart, kidney, liver, spleen, soleus muscle, and brown fat.

The protein localises to the cytoplasm. The protein resides in the cell membrane. The catalysed reaction is chloride(in) = chloride(out). With respect to regulation, channel activity is redox- and pH-regulated. Inhibited by IAA-94. In terms of biological role, in the soluble state, catalyzes glutaredoxin-like thiol disulfide exchange reactions with reduced glutathione as electron donor. Can insert into membranes and form voltage-dependent chloride-selective channels. The channel opens upon membrane depolarization at positive voltages and closes at negative membrane voltages. May play a critical role in water-secreting cells, possibly through the regulation of chloride ion transport. This chain is Chloride intracellular channel protein 6, found in Homo sapiens (Human).